The sequence spans 179 residues: MSRVGKKLLEIPSGVTVTLNEGNTVAVKGPKGELTRTFHPDMEIKIEDNVLTVTRPSDHKEHRALHGTTRSLLGNMVEGVSKGFERGLELVGVGYRAAKSGNKLVLNVGYSHPVEIVPEEGIEIEVPSQTKVVVKGTDKERVGAIAANIRAVRSPEPYKGKGIRYEGEVVRRKEGKSAK.

Belongs to the universal ribosomal protein uL6 family. In terms of assembly, part of the 50S ribosomal subunit.

In terms of biological role, this protein binds to the 23S rRNA, and is important in its secondary structure. It is located near the subunit interface in the base of the L7/L12 stalk, and near the tRNA binding site of the peptidyltransferase center. This Bacillus velezensis (strain DSM 23117 / BGSC 10A6 / LMG 26770 / FZB42) (Bacillus amyloliquefaciens subsp. plantarum) protein is Large ribosomal subunit protein uL6.